We begin with the raw amino-acid sequence, 549 residues long: 4-hydroxybutyrate--CoA ligase 2 (549 aa).

Residues 195 to 203, 336 to 341, Asp425, and Arg440 contribute to the ATP site; these read TSGTTGLPK and ETYGPH. CoA is bound by residues 448 to 450, Lys506, and 514 to 516; these read GGE and CPK. Position 530 (Lys530) interacts with ATP.

The protein belongs to the ATP-dependent AMP-binding enzyme family. Mg(2+) is required as a cofactor. It depends on Mn(2+) as a cofactor.

The enzyme catalyses 4-hydroxybutanoate + ATP + CoA = 4-hydroxybutanoyl-CoA + AMP + diphosphate. The catalysed reaction is acetate + ATP + CoA = acetyl-CoA + AMP + diphosphate. It catalyses the reaction propanoate + ATP + CoA = propanoyl-CoA + AMP + diphosphate. It carries out the reaction a medium-chain fatty acid + ATP + CoA = a medium-chain fatty acyl-CoA + AMP + diphosphate. Its function is as follows. Catalyzes the ligation of coenzyme A (CoA) to 4-hydroxybutyrate (4HB). It can also use butyrate, valerate, propionate, acetate and 3-hydroxybutyrate (3HB) as substrates. The polypeptide is 4-hydroxybutyrate--CoA ligase 2 (Metallosphaera sedula (strain ATCC 51363 / DSM 5348 / JCM 9185 / NBRC 15509 / TH2)).